We begin with the raw amino-acid sequence, 92 residues long: uncharacterized protein (92 aa).

This is an uncharacterized protein from Archaeoglobus fulgidus (strain ATCC 49558 / DSM 4304 / JCM 9628 / NBRC 100126 / VC-16).